The sequence spans 162 residues: Cyclic pyranopterin monophosphate synthase (162 aa).

Residues 75–77 (MCH) and 115–116 (ME) contribute to the substrate site. Aspartate 130 is a catalytic residue.

The protein belongs to the MoaC family. As to quaternary structure, homohexamer; trimer of dimers.

The catalysed reaction is (8S)-3',8-cyclo-7,8-dihydroguanosine 5'-triphosphate = cyclic pyranopterin phosphate + diphosphate. It functions in the pathway cofactor biosynthesis; molybdopterin biosynthesis. Catalyzes the conversion of (8S)-3',8-cyclo-7,8-dihydroguanosine 5'-triphosphate to cyclic pyranopterin monophosphate (cPMP). The chain is Cyclic pyranopterin monophosphate synthase from Geobacillus thermodenitrificans (strain NG80-2).